The chain runs to 212 residues: Dephospho-CoA kinase (212 aa).

Positions 3–207 (IIGLTGGIAS…RHLADDPEPG (205 aa)) constitute a DPCK domain. Residue 11-16 (ASGKST) coordinates ATP.

This sequence belongs to the CoaE family.

The protein resides in the cytoplasm. The catalysed reaction is 3'-dephospho-CoA + ATP = ADP + CoA + H(+). It participates in cofactor biosynthesis; coenzyme A biosynthesis; CoA from (R)-pantothenate: step 5/5. In terms of biological role, catalyzes the phosphorylation of the 3'-hydroxyl group of dephosphocoenzyme A to form coenzyme A. This Moorella thermoacetica (strain ATCC 39073 / JCM 9320) protein is Dephospho-CoA kinase.